The sequence spans 156 residues: V-type proton ATPase 16 kDa proteolipid subunit c (156 aa).

At 1 to 7 the chain is on the lumenal side; sequence MAENPIY. The chain crosses the membrane as a helical span at residues 8 to 30; it reads GPFFGVMGAASAIIFSALGAAYG. Topologically, residues 31 to 52 are cytoplasmic; it reads TAKSGTGIAAMSVMRPELIMKS. A helical transmembrane segment spans residues 53–73; the sequence is IIPVVMAGIIAIYGLVVAVLI. Residues 74–92 are Lumenal-facing; that stretch reads AGSLDSPSNNYTLYRGFIH. Residues 93–114 traverse the membrane as a helical segment; the sequence is LGAGLAVGFSGLAAGFAIGIVG. Residues 115-126 lie on the Cytoplasmic side of the membrane; that stretch reads DAGVRGTAQQPR. A helical membrane pass occupies residues 127 to 152; the sequence is LFVGMILILIFAEVLGLYGLIVAIYL. Residues 153–156 lie on the Lumenal side of the membrane; sequence YTKQ.

Belongs to the V-ATPase proteolipid subunit family. In terms of assembly, V-ATPase is a heteromultimeric enzyme made up of two complexes: the ATP-hydrolytic V1 complex and the proton translocation V0 complex. The V1 complex consists of three catalytic AB heterodimers that form a heterohexamer, three peripheral stalks each consisting of EG heterodimers, one central rotor including subunits D and F, and the regulatory subunits C and H. The proton translocation complex V0 consists of the proton transport subunit a, a ring of proteolipid subunits c9c'', rotary subunit d, subunits e and f, and the accessory subunits VhaAC45 and ATP6AP2.

Its subcellular location is the membrane. Functionally, proton-conducting pore forming subunit of the V0 complex of vacuolar(H+)-ATPase (V-ATPase), a multisubunit enzyme composed of a peripheral complex (V1) that hydrolyzes ATP and a membrane integral complex (V0) that translocates protons. V-ATPase is responsible for acidifying and maintaining the pH of intracellular compartments and in some cell types, is targeted to the plasma membrane, where it is responsible for acidifying the extracellular environment. The polypeptide is V-type proton ATPase 16 kDa proteolipid subunit c (VHA16) (Manduca sexta (Tobacco hawkmoth)).